The chain runs to 1028 residues: Unconventional myosin-Ic-A (1028 aa).

M1 is subject to N-acetylmethionine. Positions 12–696 (GVQDFVLLEN…TLFATEDALE (685 aa)) constitute a Myosin motor domain. 105 to 112 (GESGSGKT) contacts ATP. K348 is subject to N6-methyllysine. Residues 573-595 (LSKLMEILMSKEPSYVRCIKPND) form an actin-binding region. IQ domains lie at 699–728 (KQGI…SAIN) and 722–751 (MKHS…AVDV). In terms of domain architecture, TH1 spans 850–1024 (KDNYPQSVPR…NGHLSVVAPR (175 aa)).

Belongs to the TRAFAC class myosin-kinesin ATPase superfamily. Myosin family. In terms of assembly, interacts (via its IQ motifs) with calmodulin.

Its subcellular location is the cytoplasm. It is found in the cell membrane. The protein resides in the cell projection. It localises to the stereocilium membrane. Myosins are actin-based motor molecules with ATPase activity. Unconventional myosins serve in intracellular movements. Their highly divergent tails are presumed to bind to membranous compartments, which would be moved relative to actin filaments. Involved in egg activation by coupling dynamic actin to membrane. The protein is Unconventional myosin-Ic-A (myo1c-a) of Xenopus laevis (African clawed frog).